Reading from the N-terminus, the 182-residue chain is Ribosome-recycling factor (182 aa).

This sequence belongs to the RRF family.

The protein localises to the cytoplasm. Its function is as follows. Responsible for the release of ribosomes from messenger RNA at the termination of protein biosynthesis. May increase the efficiency of translation by recycling ribosomes from one round of translation to another. This Synechococcus sp. (strain CC9605) protein is Ribosome-recycling factor.